The primary structure comprises 145 residues: Basic phospholipase A2 P'513 (145 aa).

The first 21 residues, 1 to 21 (MYPAHLLLLLAVCVSLLGASA), serve as a signal peptide directing secretion. The propeptide occupies 22-27 (IPPLPL). Disulfide bonds link Cys38/Cys98, Cys54/Cys144, Cys56/Cys72, Cys71/Cys125, Cys78/Cys118, Cys87/Cys111, and Cys105/Cys116. Positions 55, 57, and 59 each coordinate Ca(2+). The active site involves His75. Asp76 lines the Ca(2+) pocket. Residue Asp119 is part of the active site.

It belongs to the phospholipase A2 family. Group I subfamily. D49 sub-subfamily. Ca(2+) is required as a cofactor. Expressed by the venom gland.

Its subcellular location is the secreted. It catalyses the reaction a 1,2-diacyl-sn-glycero-3-phosphocholine + H2O = a 1-acyl-sn-glycero-3-phosphocholine + a fatty acid + H(+). Its function is as follows. PLA2 catalyzes the calcium-dependent hydrolysis of the 2-acyl groups in 3-sn-phosphoglycerides. This chain is Basic phospholipase A2 P'513, found in Laticauda laticaudata (Blue-ringed sea krait).